Here is a 103-residue protein sequence, read N- to C-terminus: Large ribosomal subunit protein bL21 (103 aa).

It belongs to the bacterial ribosomal protein bL21 family. Part of the 50S ribosomal subunit. Contacts protein L20.

Its function is as follows. This protein binds to 23S rRNA in the presence of protein L20. The chain is Large ribosomal subunit protein bL21 from Hahella chejuensis (strain KCTC 2396).